The primary structure comprises 201 residues: NAD(P)H quinone oxidoreductase PST2 (201 aa).

The region spanning 6–192 is the Flavodoxin-like domain; it reads VAIIIYSLYH…SIAQQQGEDF (187 aa). FMN is bound by residues 12–16 and 112–164; these read SLYHH and VFVS…SPWG.

The protein belongs to the WrbA family. Requires FMN as cofactor.

The protein resides in the cell membrane. The catalysed reaction is a quinone + NADH + H(+) = a quinol + NAD(+). It catalyses the reaction a quinone + NADPH + H(+) = a quinol + NADP(+). Its function is as follows. Flavodoxin-like protein (FLP) that plays a role in cell wall integrity, oxidative stress protection and virulence. FLPs act as NAD(P)H quinone oxidoreductases. Reduces ubiquinone (coenzyme Q), enabling it to serve as an antioxidant in the membrane. The sequence is that of NAD(P)H quinone oxidoreductase PST2 from Candida albicans (strain SC5314 / ATCC MYA-2876) (Yeast).